A 355-amino-acid polypeptide reads, in one-letter code: Histidinol-phosphate aminotransferase 2 (355 aa).

N6-(pyridoxal phosphate)lysine is present on lysine 213.

It belongs to the class-II pyridoxal-phosphate-dependent aminotransferase family. Histidinol-phosphate aminotransferase subfamily. As to quaternary structure, homodimer. Requires pyridoxal 5'-phosphate as cofactor.

The enzyme catalyses L-histidinol phosphate + 2-oxoglutarate = 3-(imidazol-4-yl)-2-oxopropyl phosphate + L-glutamate. The protein operates within amino-acid biosynthesis; L-histidine biosynthesis; L-histidine from 5-phospho-alpha-D-ribose 1-diphosphate: step 7/9. The polypeptide is Histidinol-phosphate aminotransferase 2 (Burkholderia lata (strain ATCC 17760 / DSM 23089 / LMG 22485 / NCIMB 9086 / R18194 / 383)).